Here is a 321-residue protein sequence, read N- to C-terminus: uncharacterized protein (321 aa).

This is an uncharacterized protein from Acanthamoeba polyphaga (Amoeba).